A 582-amino-acid polypeptide reads, in one-letter code: A-type ATP synthase subunit A 1 (582 aa).

Residue 231-238 (GPFGSGKT) participates in ATP binding.

It belongs to the ATPase alpha/beta chains family. In terms of assembly, has multiple subunits with at least A(3), B(3), C, D, E, F, H, I and proteolipid K(x).

The protein resides in the cell membrane. The enzyme catalyses ATP + H2O + 4 H(+)(in) = ADP + phosphate + 5 H(+)(out). Its function is as follows. Component of the A-type ATP synthase that produces ATP from ADP in the presence of a proton gradient across the membrane. The A chain is the catalytic subunit. The chain is A-type ATP synthase subunit A 1 from Methanospirillum hungatei JF-1 (strain ATCC 27890 / DSM 864 / NBRC 100397 / JF-1).